The sequence spans 209 residues: Casparian strip membrane protein 1 (209 aa).

The Cytoplasmic segment spans residues 1–46 (MEKSESTKIDVVETNKERKGKAPLLGKAPVVAAAVVHAKGGGAKRG). A helical membrane pass occupies residues 47 to 67 (IAIFDLILRIAAFASALGAAV). The Extracellular segment spans residues 68-96 (AMATTEETLPFFTQFFQFEASYDDLPTFT). Residues 97–117 (FFVVAMAIVVAYLVLSVPFSI) form a helical membrane-spanning segment. At 118–129 (VCIVRPHAVVPR) the chain is on the cytoplasmic side. A helical membrane pass occupies residues 130 to 150 (LLLIIFDTVIIALTTGAAGSS). The Extracellular segment spans residues 151–179 (AAIVYLAHNGNQDANWLAICQQFGDFCQR). The helical transmembrane segment at 180–200 (VSGAVVAAFVTVVILIFLVVL) threads the bilayer. Residues 201–209 (SASALRRHH) are Cytoplasmic-facing.

The protein belongs to the Casparian strip membrane proteins (CASP) family. Homodimer and heterodimers.

It localises to the cell membrane. Functionally, regulates membrane-cell wall junctions and localized cell wall deposition. Required for establishment of the Casparian strip membrane domain (CSD) and the subsequent formation of Casparian strips, a cell wall modification of the root endodermis that determines an apoplastic barrier between the intraorganismal apoplasm and the extraorganismal apoplasm and prevents lateral diffusion. The polypeptide is Casparian strip membrane protein 1 (Nicotiana tabacum (Common tobacco)).